The primary structure comprises 147 residues: NAD(P)H-quinone oxidoreductase subunit N (147 aa).

Belongs to the complex I NdhN subunit family. In terms of assembly, NDH-1 can be composed of about 15 different subunits; different subcomplexes with different compositions have been identified which probably have different functions.

It localises to the cellular thylakoid membrane. The enzyme catalyses a plastoquinone + NADH + (n+1) H(+)(in) = a plastoquinol + NAD(+) + n H(+)(out). The catalysed reaction is a plastoquinone + NADPH + (n+1) H(+)(in) = a plastoquinol + NADP(+) + n H(+)(out). NDH-1 shuttles electrons from an unknown electron donor, via FMN and iron-sulfur (Fe-S) centers, to quinones in the respiratory and/or the photosynthetic chain. The immediate electron acceptor for the enzyme in this species is believed to be plastoquinone. Couples the redox reaction to proton translocation, and thus conserves the redox energy in a proton gradient. Cyanobacterial NDH-1 also plays a role in inorganic carbon-concentration. The chain is NAD(P)H-quinone oxidoreductase subunit N from Synechococcus sp. (strain JA-3-3Ab) (Cyanobacteria bacterium Yellowstone A-Prime).